The following is a 376-amino-acid chain: Alanine racemase (376 aa).

Catalysis depends on K44, which acts as the Proton acceptor; specific for D-alanine. K44 is modified (N6-(pyridoxal phosphate)lysine). A substrate-binding site is contributed by R139. Y271 (proton acceptor; specific for L-alanine) is an active-site residue. M319 serves as a coordination point for substrate.

This sequence belongs to the alanine racemase family. The cofactor is pyridoxal 5'-phosphate.

The enzyme catalyses L-alanine = D-alanine. It functions in the pathway amino-acid biosynthesis; D-alanine biosynthesis; D-alanine from L-alanine: step 1/1. Functionally, catalyzes the interconversion of L-alanine and D-alanine. May also act on other amino acids. The protein is Alanine racemase (alr) of Bordetella petrii (strain ATCC BAA-461 / DSM 12804 / CCUG 43448).